Here is a 209-residue protein sequence, read N- to C-terminus: Uracil phosphoribosyltransferase (209 aa).

Residues Arg79, Arg104, and 131–139 (DPMLATGGS) each bind 5-phospho-alpha-D-ribose 1-diphosphate. Uracil-binding positions include Ile194 and 199–201 (GDA). Asp200 is a 5-phospho-alpha-D-ribose 1-diphosphate binding site.

The protein belongs to the UPRTase family. Mg(2+) serves as cofactor.

The catalysed reaction is UMP + diphosphate = 5-phospho-alpha-D-ribose 1-diphosphate + uracil. It functions in the pathway pyrimidine metabolism; UMP biosynthesis via salvage pathway; UMP from uracil: step 1/1. Its activity is regulated as follows. Allosterically activated by GTP. Functionally, catalyzes the conversion of uracil and 5-phospho-alpha-D-ribose 1-diphosphate (PRPP) to UMP and diphosphate. In Streptococcus pyogenes serotype M1, this protein is Uracil phosphoribosyltransferase.